The sequence spans 211 residues: Riboflavin kinase (211 aa).

The interval 1–85 (MKKILMLIEL…CDKISNALSK (85 aa)) is H-T-H motif-like. A riboflavin kinase region spans residues 86 to 211 (GVIVGEVVSG…GDRVRLEVIQ (126 aa)). 95–100 (GLGEGA) lines the CDP pocket. Residues Thr-122 and Asn-124 each coordinate Mg(2+). Residues Thr-178 and Glu-186 each contribute to the FMN site. Position 191–194 (191–194 (VNLR)) interacts with CDP.

This sequence belongs to the archaeal riboflavin kinase family. Mg(2+) serves as cofactor.

It catalyses the reaction riboflavin + CTP = CDP + FMN + H(+). The protein operates within cofactor biosynthesis; FMN biosynthesis; FMN from riboflavin (CTP route): step 1/1. In terms of biological role, catalyzes the CTP-dependent phosphorylation of riboflavin (vitamin B2) to form flavin mononucleotide (FMN). This chain is Riboflavin kinase (ribK), found in Thermococcus kodakarensis (strain ATCC BAA-918 / JCM 12380 / KOD1) (Pyrococcus kodakaraensis (strain KOD1)).